The following is a 298-amino-acid chain: Acetaldehyde dehydrogenase (298 aa).

6–9 is a binding site for NAD(+); sequence SGNI. Cys121 (acyl-thioester intermediate) is an active-site residue. Residues 152 to 160 and Asn271 each bind NAD(+); that span reads SAGPGTRAN.

The protein belongs to the acetaldehyde dehydrogenase family.

It catalyses the reaction acetaldehyde + NAD(+) + CoA = acetyl-CoA + NADH + H(+). The chain is Acetaldehyde dehydrogenase from Mycobacterium avium (strain 104).